The primary structure comprises 552 residues: Threonylcarbamoyladenosine tRNA methylthiotransferase (552 aa).

A disordered region spans residues 31 to 61; the sequence is YENKKTVTVRAKKRSQIRLESQEEEEKPKPT. The MTTase N-terminal domain occupies 71–178; the sequence is QKVFVKTWGC…VVEVVEETLK (108 aa). [4Fe-4S] cluster-binding residues include cysteine 80, cysteine 115, cysteine 144, cysteine 221, cysteine 225, and cysteine 228. In terms of domain architecture, Radical SAM core spans 207-438; that stretch reads RKNPLIEIIS…DLFYSYEPYA (232 aa). One can recognise a TRAM domain in the interval 438–500; sequence ADRVGEIYTV…KFSMVGEILD (63 aa). The helical transmembrane segment at 532–552 threads the bilayer; the sequence is FGIALVLGSLAFLIQLVVRLL.

It belongs to the methylthiotransferase family. CDKAL1 subfamily. [4Fe-4S] cluster is required as a cofactor.

The protein resides in the membrane. It carries out the reaction N(6)-L-threonylcarbamoyladenosine(37) in tRNA + (sulfur carrier)-SH + AH2 + 2 S-adenosyl-L-methionine = 2-methylsulfanyl-N(6)-L-threonylcarbamoyladenosine(37) in tRNA + (sulfur carrier)-H + 5'-deoxyadenosine + L-methionine + A + S-adenosyl-L-homocysteine + 2 H(+). Functionally, catalyzes the methylthiolation of N6-threonylcarbamoyladenosine (t(6)A), leading to the formation of 2-methylthio-N6-threonylcarbamoyladenosine (ms(2)t(6)A) at position 37 in tRNAs that read codons beginning with adenine. This is Threonylcarbamoyladenosine tRNA methylthiotransferase from Drosophila melanogaster (Fruit fly).